A 453-amino-acid chain; its full sequence is UPF0210 protein Mbar_A3181 (453 aa).

This sequence belongs to the UPF0210 family.

This chain is UPF0210 protein Mbar_A3181, found in Methanosarcina barkeri (strain Fusaro / DSM 804).